The following is a 349-amino-acid chain: L-lactate dehydrogenase (349 aa).

The interval 199 to 219 (APEGSIIGADGNPTTDASTMF) is disordered.

This sequence belongs to the LDH2/MDH2 oxidoreductase family.

It is found in the cytoplasm. It catalyses the reaction (S)-lactate + NAD(+) = pyruvate + NADH + H(+). It functions in the pathway fermentation; pyruvate fermentation to lactate; (S)-lactate from pyruvate: step 1/1. This Cupriavidus necator (strain ATCC 17699 / DSM 428 / KCTC 22496 / NCIMB 10442 / H16 / Stanier 337) (Ralstonia eutropha) protein is L-lactate dehydrogenase (ldh).